Consider the following 121-residue polypeptide: Putative iron-sulfur cluster insertion protein ErpA (121 aa).

Residues cysteine 49, cysteine 113, and cysteine 115 each contribute to the iron-sulfur cluster site.

Belongs to the HesB/IscA family. As to quaternary structure, homodimer. The cofactor is iron-sulfur cluster.

Required for insertion of 4Fe-4S clusters. The sequence is that of Putative iron-sulfur cluster insertion protein ErpA from Nitrosomonas eutropha (strain DSM 101675 / C91 / Nm57).